A 281-amino-acid chain; its full sequence is Bifunctional protein FolD (281 aa).

NADP(+) is bound by residues 165–167 (GRS) and Ser-190.

It belongs to the tetrahydrofolate dehydrogenase/cyclohydrolase family. Homodimer.

The enzyme catalyses (6R)-5,10-methylene-5,6,7,8-tetrahydrofolate + NADP(+) = (6R)-5,10-methenyltetrahydrofolate + NADPH. It catalyses the reaction (6R)-5,10-methenyltetrahydrofolate + H2O = (6R)-10-formyltetrahydrofolate + H(+). It functions in the pathway one-carbon metabolism; tetrahydrofolate interconversion. Functionally, catalyzes the oxidation of 5,10-methylenetetrahydrofolate to 5,10-methenyltetrahydrofolate and then the hydrolysis of 5,10-methenyltetrahydrofolate to 10-formyltetrahydrofolate. This chain is Bifunctional protein FolD, found in Polaromonas sp. (strain JS666 / ATCC BAA-500).